A 211-amino-acid polypeptide reads, in one-letter code: Large ribosomal subunit protein uL4 (211 aa).

Residues 40-85 (QQAHSRQGTASTLTRSEVRGGGRKPYKQKGTGRARQGSIRTPLRPG) are disordered. Residues 41-54 (QAHSRQGTASTLTR) show a composition bias toward polar residues. The span at 60-71 (GGRKPYKQKGTG) shows a compositional bias: basic residues.

The protein belongs to the universal ribosomal protein uL4 family. Part of the 50S ribosomal subunit.

In terms of biological role, one of the primary rRNA binding proteins, this protein initially binds near the 5'-end of the 23S rRNA. It is important during the early stages of 50S assembly. It makes multiple contacts with different domains of the 23S rRNA in the assembled 50S subunit and ribosome. Forms part of the polypeptide exit tunnel. This is Large ribosomal subunit protein uL4 from Prochlorococcus marinus (strain NATL2A).